The chain runs to 189 residues: Large ribosomal subunit protein bL9 (189 aa).

This sequence belongs to the bacterial ribosomal protein bL9 family.

In terms of biological role, binds to the 23S rRNA. This chain is Large ribosomal subunit protein bL9, found in Brucella abortus (strain S19).